The chain runs to 64 residues: Translational regulator CsrA (64 aa).

Belongs to the CsrA/RsmA family. In terms of assembly, homodimer; the beta-strands of each monomer intercalate to form a hydrophobic core, while the alpha-helices form wings that extend away from the core.

The protein resides in the cytoplasm. A key translational regulator that binds mRNA to regulate translation initiation and/or mRNA stability. Mediates global changes in gene expression, shifting from rapid growth to stress survival by linking envelope stress, the stringent response and the catabolite repression systems. Usually binds in the 5'-UTR; binding at or near the Shine-Dalgarno sequence prevents ribosome-binding, repressing translation, binding elsewhere in the 5'-UTR can activate translation and/or stabilize the mRNA. Its function is antagonized by small RNA(s). In Thioalkalivibrio sulfidiphilus (strain HL-EbGR7), this protein is Translational regulator CsrA.